The following is a 518-amino-acid chain: Bifunctional methyltransferase (518 aa).

The interval 1–300 is hemK; sequence MQYSIKQILN…SHNRVIEISP (300 aa). Residues 1-302 are RF MTase; it reads MQYSIKQILN…NRVIEISPIN (302 aa). S-adenosyl-L-methionine is bound by residues 140–144, Asp163, Trp192, Asn207, Glu347, Glu372, Asn399, and Asp421; that span reads GTGSG. Substrate is bound at residue 207 to 210; the sequence is NPPY. A tRNA (guanine-N(7)-)-methyltransferase region spans residues 301 to 518; it reads INLNRSYARR…MILQHALTGH (218 aa). Positions 305-518 are tRNA MTase; sequence RSYARRIGKS…MILQHALTGH (214 aa). Asp421 is a catalytic residue. Positions 425 and 457 each coordinate substrate.

It in the C-terminal section; belongs to the class I-like SAM-binding methyltransferase superfamily. TrmB family. The protein in the N-terminal section; belongs to the protein N5-glutamine methyltransferase family. PrmC subfamily.

It carries out the reaction L-glutaminyl-[peptide chain release factor] + S-adenosyl-L-methionine = N(5)-methyl-L-glutaminyl-[peptide chain release factor] + S-adenosyl-L-homocysteine + H(+). The enzyme catalyses guanosine(46) in tRNA + S-adenosyl-L-methionine = N(7)-methylguanosine(46) in tRNA + S-adenosyl-L-homocysteine. Methylates the class 1 translation termination release factors RF1/PrfA and RF2/PrfB on the glutamine residue of the universally conserved GGQ motif. Functionally, catalyzes the formation of N(7)-methylguanine at position 46 (m7G46) in tRNA. In Rickettsia typhi (strain ATCC VR-144 / Wilmington), this protein is Bifunctional methyltransferase (prmC/trmB).